The chain runs to 165 residues: Peptide methionine sulfoxide reductase MsrA (165 aa).

Residue Cys-11 is part of the active site.

This sequence belongs to the MsrA Met sulfoxide reductase family.

It catalyses the reaction L-methionyl-[protein] + [thioredoxin]-disulfide + H2O = L-methionyl-(S)-S-oxide-[protein] + [thioredoxin]-dithiol. It carries out the reaction [thioredoxin]-disulfide + L-methionine + H2O = L-methionine (S)-S-oxide + [thioredoxin]-dithiol. Its function is as follows. Has an important function as a repair enzyme for proteins that have been inactivated by oxidation. Catalyzes the reversible oxidation-reduction of methionine sulfoxide in proteins to methionine. This chain is Peptide methionine sulfoxide reductase MsrA, found in Ureaplasma parvum serovar 3 (strain ATCC 27815 / 27 / NCTC 11736).